The chain runs to 157 residues: MRCPKCGGSKSSVIDSRQAEDGNTIRRRRECEDCQHRFTTYERVEERTLVVVKKDGTREQFSRDKIFNGIIRSAQKRPVSSDEIEALVNRIEQKVRSSSDNEISSDFIGNLVMDELAELDEITYVRFASVYRSFKDVGELESLLQQITKGVKKKREE.

The interval 1–26 (MRCPKCGGSKSSVIDSRQAEDGNTIR) is disordered. Residues 3–34 (CPKCGGSKSSVIDSRQAEDGNTIRRRRECEDC) fold into a zinc finger. A compositionally biased stretch (basic and acidic residues) spans 17–26 (RQAEDGNTIR). An ATP-cone domain is found at 49-139 (LVVVKKDGTR…VYRSFKDVGE (91 aa)).

It belongs to the NrdR family. It depends on Zn(2+) as a cofactor.

Functionally, negatively regulates transcription of bacterial ribonucleotide reductase nrd genes and operons by binding to NrdR-boxes. This Streptococcus gordonii (strain Challis / ATCC 35105 / BCRC 15272 / CH1 / DL1 / V288) protein is Transcriptional repressor NrdR.